We begin with the raw amino-acid sequence, 655 residues long: p-hydroxybenzoic acid efflux pump subunit AaeB (655 aa).

Helical transmembrane passes span 13–33 (FAVKLATAIVLALFVGFHFQL), 38–58 (WAVLTAAIVAAGPAFAAGGEP), 69–89 (LRIIGTFIGCIAGLVIIIAMI), 93–113 (LLMILVCCIWAGFCTWISSLV), 121–141 (WGLAGYTALIIVITIQPEPLL), 152–172 (EIVIGIVCAIMADLLFSPRSI), 370–390 (LFWLWTGWTSGSGAMVMIAVV), 407–427 (FIYGTLAALPLGLLYFLVIIP), 431–451 (QSMLLLCISLAVLGFFLGIEV), 459–479 (MGALASTINIIVLDNPMTFHF), and 482–502 (FLDSALGQIVGCVLAFTVILL).

This sequence belongs to the aromatic acid exporter ArAE (TC 2.A.85) family.

It localises to the cell inner membrane. Its function is as follows. Forms an efflux pump with AaeA. Could function as a metabolic relief valve, allowing to eliminate certain compounds when they accumulate to high levels in the cell. This Escherichia coli (strain K12 / MC4100 / BW2952) protein is p-hydroxybenzoic acid efflux pump subunit AaeB.